Consider the following 182-residue polypeptide: Crossover junction endodeoxyribonuclease RuvC (182 aa).

Residues D7, E67, and D139 contribute to the active site. Residues D7, E67, and D139 each coordinate Mg(2+).

It belongs to the RuvC family. As to quaternary structure, homodimer which binds Holliday junction (HJ) DNA. The HJ becomes 2-fold symmetrical on binding to RuvC with unstacked arms; it has a different conformation from HJ DNA in complex with RuvA. In the full resolvosome a probable DNA-RuvA(4)-RuvB(12)-RuvC(2) complex forms which resolves the HJ. The cofactor is Mg(2+).

It is found in the cytoplasm. The catalysed reaction is Endonucleolytic cleavage at a junction such as a reciprocal single-stranded crossover between two homologous DNA duplexes (Holliday junction).. The RuvA-RuvB-RuvC complex processes Holliday junction (HJ) DNA during genetic recombination and DNA repair. Endonuclease that resolves HJ intermediates. Cleaves cruciform DNA by making single-stranded nicks across the HJ at symmetrical positions within the homologous arms, yielding a 5'-phosphate and a 3'-hydroxyl group; requires a central core of homology in the junction. The consensus cleavage sequence is 5'-(A/T)TT(C/G)-3'. Cleavage occurs on the 3'-side of the TT dinucleotide at the point of strand exchange. HJ branch migration catalyzed by RuvA-RuvB allows RuvC to scan DNA until it finds its consensus sequence, where it cleaves and resolves the cruciform DNA. The polypeptide is Crossover junction endodeoxyribonuclease RuvC (Bordetella petrii (strain ATCC BAA-461 / DSM 12804 / CCUG 43448)).